The sequence spans 103 residues: Large ribosomal subunit protein bL21 (103 aa).

Belongs to the bacterial ribosomal protein bL21 family. As to quaternary structure, part of the 50S ribosomal subunit. Contacts protein L20.

In terms of biological role, this protein binds to 23S rRNA in the presence of protein L20. The polypeptide is Large ribosomal subunit protein bL21 (Vibrio atlanticus (strain LGP32) (Vibrio splendidus (strain Mel32))).